A 97-amino-acid polypeptide reads, in one-letter code: ESAT-6-like protein EsxG (97 aa).

It belongs to the WXG100 family. CFP-10 subfamily. Forms a tight 1:1 complex with EsxH.

It is found in the secreted. This is ESAT-6-like protein EsxG from Mycolicibacterium smegmatis (strain ATCC 700084 / mc(2)155) (Mycobacterium smegmatis).